The following is a 178-amino-acid chain: Large ribosomal subunit protein uL6 (178 aa).

Belongs to the universal ribosomal protein uL6 family. Part of the 50S ribosomal subunit.

Functionally, this protein binds to the 23S rRNA, and is important in its secondary structure. It is located near the subunit interface in the base of the L7/L12 stalk, and near the tRNA binding site of the peptidyltransferase center. The chain is Large ribosomal subunit protein uL6 from Nitratiruptor sp. (strain SB155-2).